A 235-amino-acid chain; its full sequence is Ubiquinone biosynthesis O-methyltransferase (235 aa).

S-adenosyl-L-methionine contacts are provided by Arg-40, Gly-60, Asp-81, and Met-125.

Belongs to the methyltransferase superfamily. UbiG/COQ3 family.

It carries out the reaction a 3-demethylubiquinol + S-adenosyl-L-methionine = a ubiquinol + S-adenosyl-L-homocysteine + H(+). The enzyme catalyses a 3-(all-trans-polyprenyl)benzene-1,2-diol + S-adenosyl-L-methionine = a 2-methoxy-6-(all-trans-polyprenyl)phenol + S-adenosyl-L-homocysteine + H(+). It participates in cofactor biosynthesis; ubiquinone biosynthesis. Functionally, O-methyltransferase that catalyzes the 2 O-methylation steps in the ubiquinone biosynthetic pathway. This chain is Ubiquinone biosynthesis O-methyltransferase, found in Nitrosomonas europaea (strain ATCC 19718 / CIP 103999 / KCTC 2705 / NBRC 14298).